A 206-amino-acid polypeptide reads, in one-letter code: Protein-methionine-sulfoxide reductase heme-binding subunit MsrQ (206 aa).

A run of 6 helical transmembrane segments spans residues 7–27, 43–63, 77–97, 112–132, 142–162, and 172–192; these read IIIH…LLSG, FLGF…KVFY, LGLW…ALEL, GYLI…LSSW, WWFY…IHYV, and SMLY…GLFI.

The protein belongs to the MsrQ family. In terms of assembly, heterodimer of a catalytic subunit (MsrP) and a heme-binding subunit (MsrQ). It depends on FMN as a cofactor. Heme b is required as a cofactor.

Its subcellular location is the cell inner membrane. Functionally, part of the MsrPQ system that repairs oxidized periplasmic proteins containing methionine sulfoxide residues (Met-O), using respiratory chain electrons. Thus protects these proteins from oxidative-stress damage caused by reactive species of oxygen and chlorine generated by the host defense mechanisms. MsrPQ is essential for the maintenance of envelope integrity under bleach stress, rescuing a wide series of structurally unrelated periplasmic proteins from methionine oxidation. MsrQ provides electrons for reduction to the reductase catalytic subunit MsrP, using the quinone pool of the respiratory chain. The sequence is that of Protein-methionine-sulfoxide reductase heme-binding subunit MsrQ from Pasteurella multocida (strain Pm70).